The chain runs to 156 residues: MDLSNLKPAEGATQAGQRLGRGEGSGRGGHSSTRGTKGQSSRSGSGTRPIWFEGGQTPLFQRVPKHGFNNAPFRTDYAIANVKRLQRLLDEEVLDEDEPVTPEVLADLGVVRTANRVKILGDGDLFDALEVKAHAFSESARQKIKQAGGSVTVVDQ.

The interval 1–56 is disordered; that stretch reads MDLSNLKPAEGATQAGQRLGRGEGSGRGGHSSTRGTKGQSSRSGSGTRPIWFEGGQ.

Belongs to the universal ribosomal protein uL15 family. In terms of assembly, part of the 50S ribosomal subunit.

In terms of biological role, binds to the 23S rRNA. This chain is Large ribosomal subunit protein uL15, found in Salinibacter ruber (strain DSM 13855 / M31).